The following is a 600-amino-acid chain: Transcription factor efl-3 (600 aa).

The segment at 35–65 is disordered; the sequence is LPEPRVNRTTDPDHENLLPSPVPRPSPAMSQ. A compositionally biased stretch (basic and acidic residues) spans 39 to 50; sequence RVNRTTDPDHEN. 2 DNA-binding regions span residues 95–164 and 253–343; these read RKEK…QWQG and RDRQ…VYCG.

Belongs to the E2F/DP family.

Its subcellular location is the nucleus. Its function is as follows. Probable transcription factor which represses gene expression in a subset of ventral nerve cord neurons. Involved in regulating programmed cell death and determining cell fate during development, acting in a partially redundant manner with lin-39 to repress the BH3 domain-encoding gene egl-1 in the VA and VB motor neurons. The chain is Transcription factor efl-3 from Caenorhabditis elegans.